A 241-amino-acid polypeptide reads, in one-letter code: Enterotoxin type H (241 aa).

Positions 1-24 are cleaved as a signal peptide; that stretch reads MINKIKILFSFLALLLSFTSYAKA. A disulfide bridge connects residues Cys106 and Cys116. Residues Asp191, His230, and Asp232 each contribute to the Zn(2+) site.

The protein belongs to the staphylococcal/streptococcal toxin family. As to quaternary structure, interacts with host MHC class II molecules composed of alpha/HLA-DRA and beta/HLA-DRB1 chains. Interacts with host TCR alpha-chain TRAV27. It depends on Zn(2+) as a cofactor.

It is found in the secreted. Its function is as follows. Staphylococcal enterotoxin that activates the host immune system by binding as unprocessed molecules to major histocompatibility (MHC) complex class II and T-cell receptor (TCR) molecules via their alpha domain, in particular TRAV27. In turn, this ternary complex activates a large number of T-lymphocytes initiating a systemic release of pro-inflammatory cytokines. Also causes the intoxication staphylococcal food poisoning syndrome. The illness characterized by high fever, hypotension, diarrhea, shock, and in some cases death. The protein is Enterotoxin type H (entH) of Staphylococcus aureus.